Here is a 219-residue protein sequence, read N- to C-terminus: Peptidyl-tRNA hydrolase (219 aa).

Tyrosine 26 provides a ligand contact to tRNA. Histidine 31 acts as the Proton acceptor in catalysis. TRNA contacts are provided by tyrosine 78, asparagine 80, and asparagine 126.

This sequence belongs to the PTH family. In terms of assembly, monomer.

Its subcellular location is the cytoplasm. It carries out the reaction an N-acyl-L-alpha-aminoacyl-tRNA + H2O = an N-acyl-L-amino acid + a tRNA + H(+). Its function is as follows. Hydrolyzes ribosome-free peptidyl-tRNAs (with 1 or more amino acids incorporated), which drop off the ribosome during protein synthesis, or as a result of ribosome stalling. Catalyzes the release of premature peptidyl moieties from peptidyl-tRNA molecules trapped in stalled 50S ribosomal subunits, and thus maintains levels of free tRNAs and 50S ribosomes. The polypeptide is Peptidyl-tRNA hydrolase (Trichodesmium erythraeum (strain IMS101)).